A 279-amino-acid chain; its full sequence is NH(3)-dependent NAD(+) synthetase (279 aa).

An ATP-binding site is contributed by 46–53 (GVSGGQDS). Residue aspartate 52 participates in Mg(2+) binding. A deamido-NAD(+)-binding site is contributed by arginine 139. Threonine 159 lines the ATP pocket. A Mg(2+)-binding site is contributed by glutamate 164. Lysine 172 and aspartate 179 together coordinate deamido-NAD(+). Residues lysine 188 and threonine 210 each coordinate ATP. 259–260 (HK) is a binding site for deamido-NAD(+).

This sequence belongs to the NAD synthetase family. Homodimer.

The enzyme catalyses deamido-NAD(+) + NH4(+) + ATP = AMP + diphosphate + NAD(+) + H(+). It participates in cofactor biosynthesis; NAD(+) biosynthesis; NAD(+) from deamido-NAD(+) (ammonia route): step 1/1. Functionally, catalyzes the ATP-dependent amidation of deamido-NAD to form NAD. Uses ammonia as a nitrogen source. This is NH(3)-dependent NAD(+) synthetase from Leifsonia xyli subsp. xyli (strain CTCB07).